The primary structure comprises 278 residues: MTPLQSLFESLRGQNRKALMPFLTTGDPNIDTTEAVIAAARQAGADLCEVGVPYSDPIADGPVIQASYQRALDAGFKLQHVWDLGQRLTENPKVKAMPRVTMVSYSIIYRIGMAKYVDQAMQAGYCGAIVPDLLVEEAEDLSKICREKGFDLIQLVTPTTTRDRQCRIAELSSGFLYYVSVTGITGERTALPTNLVDNVGWLREQTELPICIGFGISGPETAAQLAPVSDGLIVGSAIVRRVADAVEKAKSSGADPVKTAAEEAGDFCHSLRQAIDAA.

Residues Glu-49 and Asp-60 each act as proton acceptor in the active site.

It belongs to the TrpA family. In terms of assembly, tetramer of two alpha and two beta chains.

It carries out the reaction (1S,2R)-1-C-(indol-3-yl)glycerol 3-phosphate + L-serine = D-glyceraldehyde 3-phosphate + L-tryptophan + H2O. The protein operates within amino-acid biosynthesis; L-tryptophan biosynthesis; L-tryptophan from chorismate: step 5/5. Functionally, the alpha subunit is responsible for the aldol cleavage of indoleglycerol phosphate to indole and glyceraldehyde 3-phosphate. The chain is Tryptophan synthase alpha chain from Rhodopirellula baltica (strain DSM 10527 / NCIMB 13988 / SH1).